The primary structure comprises 601 residues: Bifunctional ribose 1,5-bisphosphokinase-thymidine phosphorylase (601 aa).

The ribose 1,5-bisphosphokinase stretch occupies residues 1-177 (MKATGTFFFV…EAGTARFVEA (177 aa)). The tract at residues 178–601 (LRTGTRTSAA…CCQAVRIDPD (424 aa)) is thymidinephosphorylase.

This sequence in the N-terminal section; belongs to the ribose 1,5-bisphosphokinase family. The protein in the C-terminal section; belongs to the thymidine/pyrimidine-nucleoside phosphorylase family. Type 2 subfamily.

The enzyme catalyses alpha-D-ribose 1,5-bisphosphate + ATP = 5-phospho-alpha-D-ribose 1-diphosphate + ADP. The catalysed reaction is thymidine + phosphate = 2-deoxy-alpha-D-ribose 1-phosphate + thymine. Its pathway is metabolic intermediate biosynthesis; 5-phospho-alpha-D-ribose 1-diphosphate biosynthesis; 5-phospho-alpha-D-ribose 1-diphosphate from D-ribose 5-phosphate (route II): step 3/3. Its function is as follows. Catalyzes the phosphorylation of ribose 1,5-bisphosphate to 5-phospho-D-ribosyl alpha-1-diphosphate (PRPP). This Cupriavidus necator (strain ATCC 17699 / DSM 428 / KCTC 22496 / NCIMB 10442 / H16 / Stanier 337) (Ralstonia eutropha) protein is Bifunctional ribose 1,5-bisphosphokinase-thymidine phosphorylase (phnN).